The following is a 382-amino-acid chain: MYIAGVMSGTSLDGIDVALVRIEGSGVDSKVKLIHFTTVPFRNDIKSEIQQALSIENSNVQLICSLNFKLGLCFANAVKEVCKEANFSLEQLDLIGSHGQTIYHQPKPEGNMIASTLQIGEPAVIAYDTNTTVISNFRTMDMAAGGQGAPLVPYSEVILYRDPSKNRLLQNIGGIGNVTVIPSQKSDQNVIAFDTGPGNMIIDEVCQRLFQLPYDQNGEIAEQGEVVDEILTYCMNHPFLKMNPPKSTGREQFGEEFVSQLLKRYEKYSKENILTTVTMFTASSIVHHYKGFILPYYEIDEVILGGGGSYNDTLVEMIRYGLKDEKCTIFIQEDIGYSSEAKEAIAFAILANETYHRNPSNVPSATGAKKSVVLGNVTYPSI.

Residue 9–16 (GTSLDGID) coordinates ATP.

Belongs to the anhydro-N-acetylmuramic acid kinase family.

It carries out the reaction 1,6-anhydro-N-acetyl-beta-muramate + ATP + H2O = N-acetyl-D-muramate 6-phosphate + ADP + H(+). The protein operates within amino-sugar metabolism; 1,6-anhydro-N-acetylmuramate degradation. Its pathway is cell wall biogenesis; peptidoglycan recycling. Functionally, catalyzes the specific phosphorylation of 1,6-anhydro-N-acetylmuramic acid (anhMurNAc) with the simultaneous cleavage of the 1,6-anhydro ring, generating MurNAc-6-P. Is required for the utilization of anhMurNAc either imported from the medium or derived from its own cell wall murein, and thus plays a role in cell wall recycling. The chain is Anhydro-N-acetylmuramic acid kinase from Bacillus cereus (strain Q1).